Reading from the N-terminus, the 459-residue chain is Glycosyl hydrolase family 109 protein (459 aa).

Positions methionine 1–alanine 31 form a signal peptide, tat-type signal. Residues glutamate 64–arginine 65, aspartate 86, tryptophan 135–histidine 138, glutamate 155–valine 156, and asparagine 184 contribute to the NAD(+) site. Substrate contacts are provided by residues tyrosine 213, arginine 232, tyrosine 244 to histidine 247, and tyrosine 326. Tyrosine 244 is an NAD(+) binding site.

Belongs to the Gfo/Idh/MocA family. Glycosyl hydrolase 109 subfamily. It depends on NAD(+) as a cofactor. In terms of processing, predicted to be exported by the Tat system. The position of the signal peptide cleavage has not been experimentally proven.

Functionally, glycosidase. The sequence is that of Glycosyl hydrolase family 109 protein from Shewanella baltica (strain OS185).